The sequence spans 648 residues: 1-deoxy-D-xylulose-5-phosphate synthase (648 aa).

Thiamine diphosphate-binding positions include His-72 and 113-115 (GHA). Mg(2+) is bound at residue Asp-144. Residues 145-146 (GA), Asn-173, and Glu-363 each bind thiamine diphosphate. Asn-173 contacts Mg(2+).

It belongs to the transketolase family. DXPS subfamily. In terms of assembly, homodimer. It depends on Mg(2+) as a cofactor. The cofactor is thiamine diphosphate.

The enzyme catalyses D-glyceraldehyde 3-phosphate + pyruvate + H(+) = 1-deoxy-D-xylulose 5-phosphate + CO2. Its pathway is metabolic intermediate biosynthesis; 1-deoxy-D-xylulose 5-phosphate biosynthesis; 1-deoxy-D-xylulose 5-phosphate from D-glyceraldehyde 3-phosphate and pyruvate: step 1/1. Catalyzes the acyloin condensation reaction between C atoms 2 and 3 of pyruvate and glyceraldehyde 3-phosphate to yield 1-deoxy-D-xylulose-5-phosphate (DXP). The chain is 1-deoxy-D-xylulose-5-phosphate synthase from Symbiobacterium thermophilum (strain DSM 24528 / JCM 14929 / IAM 14863 / T).